The primary structure comprises 462 residues: Kremen protein 2 (462 aa).

The N-terminal stretch at 1 to 25 is a signal peptide; the sequence is MGTQALQGFLFLLFLPLLQPRGASA. Over 26-364 the chain is Extracellular; the sequence is GSLHSPGLSE…SPRPGAPPAA (339 aa). A Kringle domain is found at 35 to 119; the sequence is ECFQVNGADY…YWRYCDIPSC (85 aa). Disulfide bonds link cysteine 36-cysteine 119, cysteine 60-cysteine 100, and cysteine 89-cysteine 114. The N-linked (GlcNAc...) asparagine glycan is linked to asparagine 49. The 95-residue stretch at 121-215 folds into the WSC domain; it reads MPGYLGCFVD…DGRLGVYEVS (95 aa). Cysteine 219 and cysteine 245 are joined by a disulfide. The 108-residue stretch at 219 to 326 folds into the CUB domain; sequence CQGNWTAPQG…QGFALTYRGL (108 aa). N-linked (GlcNAc...) asparagine glycans are attached at residues asparagine 222, asparagine 244, and asparagine 351. Residues 328–352 form a disordered region; that stretch reads DAAEDPEAPEGSAQTPAAPLDGANV. Residues 365-387 form a helical membrane-spanning segment; the sequence is IGARVFSTVTAVSVLLLLLLGLL. The Cytoplasmic portion of the chain corresponds to 388–462; it reads RPLRRRSCLL…SSLRSLISAL (75 aa).

In terms of assembly, interacts with ERLEC1. Forms a ternary complex with DKK1 and LRP6.

The protein resides in the membrane. In terms of biological role, receptor for Dickkopf proteins. Cooperates with DKK1/2 to inhibit Wnt/beta-catenin signaling by promoting the endocytosis of Wnt receptors LRP5 and LRP6. Plays a role in limb development; attenuates Wnt signaling in the developing limb to allow normal limb patterning and can also negatively regulate bone formation. The sequence is that of Kremen protein 2 (KREMEN2) from Homo sapiens (Human).